A 377-amino-acid polypeptide reads, in one-letter code: Alanine racemase (377 aa).

The Proton acceptor; specific for D-alanine role is filled by Lys-39. Residue Lys-39 is modified to N6-(pyridoxal phosphate)lysine. Arg-137 lines the substrate pocket. Catalysis depends on Tyr-266, which acts as the Proton acceptor; specific for L-alanine. Residue Met-314 coordinates substrate.

It belongs to the alanine racemase family. It depends on pyridoxal 5'-phosphate as a cofactor.

It carries out the reaction L-alanine = D-alanine. It participates in amino-acid biosynthesis; D-alanine biosynthesis; D-alanine from L-alanine: step 1/1. Its function is as follows. Catalyzes the interconversion of L-alanine and D-alanine. May also act on other amino acids. The sequence is that of Alanine racemase (alr) from Symbiobacterium thermophilum (strain DSM 24528 / JCM 14929 / IAM 14863 / T).